Reading from the N-terminus, the 274-residue chain is Diaminopimelate epimerase (274 aa).

Residues Asn11, Gln44, and Asn64 each coordinate substrate. Residue Cys73 is the Proton donor of the active site. Substrate is bound by residues 74–75 (GN), Asn157, Asn190, and 208–209 (ER). The active-site Proton acceptor is the Cys217. Residue 218 to 219 (GS) participates in substrate binding.

The protein belongs to the diaminopimelate epimerase family. As to quaternary structure, homodimer.

It is found in the cytoplasm. It carries out the reaction (2S,6S)-2,6-diaminopimelate = meso-2,6-diaminopimelate. Its pathway is amino-acid biosynthesis; L-lysine biosynthesis via DAP pathway; DL-2,6-diaminopimelate from LL-2,6-diaminopimelate: step 1/1. Functionally, catalyzes the stereoinversion of LL-2,6-diaminopimelate (L,L-DAP) to meso-diaminopimelate (meso-DAP), a precursor of L-lysine and an essential component of the bacterial peptidoglycan. This chain is Diaminopimelate epimerase, found in Cronobacter sakazakii (strain ATCC BAA-894) (Enterobacter sakazakii).